The following is a 268-amino-acid chain: Membrane lipoprotein TpN32 (268 aa).

An N-terminal signal peptide occupies residues 1 to 23 (MKGKTVSAALVGKLIALSVGVVA). A lipid anchor (N-palmitoyl cysteine) is attached at C24. C24 is lipidated: S-diacylglycerol cysteine.

The protein belongs to the NlpA lipoprotein family.

It localises to the cell membrane. This Treponema pallidum (strain Nichols) protein is Membrane lipoprotein TpN32 (tpn32).